The chain runs to 418 residues: LL-diaminopimelate aminotransferase (418 aa).

2 residues coordinate substrate: Tyr-25 and Gly-52. Pyridoxal 5'-phosphate is bound by residues Tyr-78, 115 to 116 (SK), Tyr-140, Asn-190, Tyr-221, and 248 to 250 (SFS). Positions 116, 140, and 190 each coordinate substrate. An N6-(pyridoxal phosphate)lysine modification is found at Lys-251. Arg-259 is a binding site for pyridoxal 5'-phosphate.

This sequence belongs to the class-I pyridoxal-phosphate-dependent aminotransferase family. As to quaternary structure, homodimer. Pyridoxal 5'-phosphate is required as a cofactor.

It localises to the cytoplasm. The enzyme catalyses (2S,6S)-2,6-diaminopimelate + 2-oxoglutarate = (S)-2,3,4,5-tetrahydrodipicolinate + L-glutamate + H2O + H(+). It functions in the pathway amino-acid biosynthesis; L-lysine biosynthesis via DAP pathway; LL-2,6-diaminopimelate from (S)-tetrahydrodipicolinate (aminotransferase route): step 1/1. Its function is as follows. Involved in the synthesis of meso-diaminopimelate (m-DAP or DL-DAP), required for both lysine and peptidoglycan biosynthesis. Catalyzes the direct conversion of tetrahydrodipicolinate to LL-diaminopimelate, a reaction that requires three enzymes in E.coli. The sequence is that of LL-diaminopimelate aminotransferase (dapL) from Methanocaldococcus jannaschii (strain ATCC 43067 / DSM 2661 / JAL-1 / JCM 10045 / NBRC 100440) (Methanococcus jannaschii).